Reading from the N-terminus, the 142-residue chain is Salivary protein 15a (142 aa).

The signal sequence occupies residues 1–20 (MKYLGLALISAVFLIGACQA). Cystine bridges form between Cys27-Cys44, Cys40-Cys108, and Cys91-Cys117.

This sequence belongs to the PBP/GOBP family. Female salivary gland (at protein level).

It is found in the secreted. In terms of biological role, inhibits contact coagulation pathway activation in the host by sequestering anionic polymers, such as polyphosphate and dextran sulfate, and thus blocking interaction of protein components of the pathway with negatively charged surfaces. Inhibits dextran sulfate-mediated autoactivation of host coagulation factor XII (F12). Inhibits dextran sulfate-mediated autoactivation of host factor XI (F11). Inhibits polyphosphate-mediated activation of host F11 by thrombin (F2). May inhibit dextran sulfate-mediated bradykinin generation in host plasma. This Phlebotomus duboscqi (Sandfly) protein is Salivary protein 15a.